A 338-amino-acid polypeptide reads, in one-letter code: Anthranilate phosphoribosyltransferase (338 aa).

5-phospho-alpha-D-ribose 1-diphosphate-binding positions include Gly-78, Gly-81–Asp-82, Thr-86, Asn-88–Thr-91, Lys-106–Ser-114, and Ser-118. Gly-78 is a binding site for anthranilate. Residue Ser-90 coordinates Mg(2+). Asn-109 is a binding site for anthranilate. Arg-164 serves as a coordination point for anthranilate. Positions 223 and 224 each coordinate Mg(2+).

It belongs to the anthranilate phosphoribosyltransferase family. As to quaternary structure, homodimer. Mg(2+) is required as a cofactor.

The enzyme catalyses N-(5-phospho-beta-D-ribosyl)anthranilate + diphosphate = 5-phospho-alpha-D-ribose 1-diphosphate + anthranilate. The protein operates within amino-acid biosynthesis; L-tryptophan biosynthesis; L-tryptophan from chorismate: step 2/5. Catalyzes the transfer of the phosphoribosyl group of 5-phosphorylribose-1-pyrophosphate (PRPP) to anthranilate to yield N-(5'-phosphoribosyl)-anthranilate (PRA). The polypeptide is Anthranilate phosphoribosyltransferase (Bacillus velezensis (strain DSM 23117 / BGSC 10A6 / LMG 26770 / FZB42) (Bacillus amyloliquefaciens subsp. plantarum)).